Consider the following 365-residue polypeptide: tRNA(Met) cytidine acetate ligase (365 aa).

ATP is bound by residues 7–20 (IAEF…HKYL), glycine 96, asparagine 152, and arginine 175.

It belongs to the TmcAL family.

The protein localises to the cytoplasm. It carries out the reaction cytidine(34) in elongator tRNA(Met) + acetate + ATP = N(4)-acetylcytidine(34) in elongator tRNA(Met) + AMP + diphosphate. Catalyzes the formation of N(4)-acetylcytidine (ac(4)C) at the wobble position of elongator tRNA(Met), using acetate and ATP as substrates. First activates an acetate ion to form acetyladenylate (Ac-AMP) and then transfers the acetyl group to tRNA to form ac(4)C34. The chain is tRNA(Met) cytidine acetate ligase from Streptococcus pneumoniae (strain JJA).